The sequence spans 502 residues: Alpha-globin transcription factor CP2 (502 aa).

The Grh/CP2 DB domain maps to 61–300 (ENKILPFQYV…SPGFNSSHSS (240 aa)). Positions 133–395 (EHQQLEGWRW…VRPRLTIYVC (263 aa)) are DNA-binding. 2 disordered regions span residues 238–268 (FKPK…YQPS) and 294–325 (FNSS…DNLL). Residues 241-265 (KGADRKQKTDREKMEKRTPHEKEKY) are compositionally biased toward basic and acidic residues. Position 353 is a phosphoserine (S353).

This sequence belongs to the grh/CP2 family. CP2 subfamily. In terms of assembly, binds to DNA as a dimer, isoform 3 does not bind to DNA or affect the binding of isoform 1 to DNA. Interacts with UBP1 and PIAS1, and is probably part of a complex containing TFCP2, UBP1 and PIAS1. Component of the SSP (stage selector protein) complex, which appears to be a heteromer of TFCP2 and 2 copies of NFE4. In terms of tissue distribution, ubiquitous. Expressed in brain, ovary, kidney, thymus, spleen, liver, adrenal, heart and lung (at protein level).

Its subcellular location is the nucleus. Binds a variety of cellular and viral promoters including fibrinogen, alpha-globin, SV40 and HIV-1 promoters. Activation of the alpha-globin promoter in erythroid cells is via synergistic interaction with UBP1. Functions as part of the SSP (stage selector protein) complex. Facilitates the interaction of the gamma-globin genes with enhancer elements contained in the locus control region in fetal erythroid cells. Interacts by binding to the stage selector element (SSE) in the proximal gamma-globin promoter. This chain is Alpha-globin transcription factor CP2 (TFCP2), found in Homo sapiens (Human).